The primary structure comprises 144 residues: Large ribosomal subunit protein uL13 (144 aa).

This sequence belongs to the universal ribosomal protein uL13 family. Part of the 50S ribosomal subunit.

This protein is one of the early assembly proteins of the 50S ribosomal subunit, although it is not seen to bind rRNA by itself. It is important during the early stages of 50S assembly. This chain is Large ribosomal subunit protein uL13, found in Clostridium tetani (strain Massachusetts / E88).